We begin with the raw amino-acid sequence, 129 residues long: Virion-associated protein (129 aa).

2 coiled-coil regions span residues 1 to 31 (MANL…ILEL) and 38 to 59 (IKES…LIND). A capsid binding region spans residues 122-129 (PAGWPNQF).

This sequence belongs to the caulimovirus ORF III family. Homotetramer, through coiled-coil domain. Homotrimer when bound on icosehadral capsid. Interacts with capsid protein, and with movement protein.

The protein resides in the virion. The protein localises to the host cell junction. It localises to the host plasmodesma. Its function is as follows. Plays a role in virus cell-to-cell and plant-to-plant transmission. Interacts with virion icosahedral capsid and movement protein, thereby facilitating virion cell-to-cell transmission through plasmodesmata opened by viral movement protein. Also interacts with aphid transmission factor, attaching the virion to aphid stylet when the animal feeds on an virus infected plant. Aphid saliva may later detach the virion, inducing release of infectious particles when the animal feeds on a new plant. This chain is Virion-associated protein, found in Cauliflower mosaic virus (strain Strasbourg) (CaMV).